We begin with the raw amino-acid sequence, 332 residues long: GTP cyclohydrolase-2 (332 aa).

2 disordered regions span residues 1–20 (MASK…SETH) and 25–46 (PLLS…IPPE). A compositionally biased stretch (polar residues) spans 29–41 (PTLTPSHIPSQTP). 171–175 (RIHSE) serves as a coordination point for GTP. Zn(2+) contacts are provided by cysteine 176, cysteine 187, and cysteine 189. GTP contacts are provided by residues glutamine 192, 214–216 (EGR), and threonine 236. The active-site Proton acceptor is aspartate 248. Arginine 250 acts as the Nucleophile in catalysis. Threonine 271 and lysine 276 together coordinate GTP.

It belongs to the GTP cyclohydrolase II family. The cofactor is Zn(2+).

It carries out the reaction GTP + 4 H2O = 2,5-diamino-6-hydroxy-4-(5-phosphoribosylamino)-pyrimidine + formate + 2 phosphate + 3 H(+). It functions in the pathway cofactor biosynthesis; riboflavin biosynthesis; 5-amino-6-(D-ribitylamino)uracil from GTP: step 1/4. In terms of biological role, catalyzes the conversion of GTP to 2,5-diamino-6-ribosylamino-4(3H)-pyrimidinone 5'-phosphate (DARP), formate and pyrophosphate. This Meyerozyma guilliermondii (strain ATCC 6260 / CBS 566 / DSM 6381 / JCM 1539 / NBRC 10279 / NRRL Y-324) (Yeast) protein is GTP cyclohydrolase-2 (RIB1).